The following is a 410-amino-acid chain: Cysteine desulfurase IscS (410 aa).

Residues 80 to 81, Asn-160, Gln-188, and 208 to 210 each bind pyridoxal 5'-phosphate; these read AT and SGH. N6-(pyridoxal phosphate)lysine is present on Lys-211. Position 248 (Thr-248) interacts with pyridoxal 5'-phosphate. Cys-334 acts as the Cysteine persulfide intermediate in catalysis. Cys-334 lines the [2Fe-2S] cluster pocket.

The protein belongs to the class-V pyridoxal-phosphate-dependent aminotransferase family. NifS/IscS subfamily. Homodimer. Forms a heterotetramer with IscU, interacts with other sulfur acceptors. It depends on pyridoxal 5'-phosphate as a cofactor.

It localises to the cytoplasm. The catalysed reaction is (sulfur carrier)-H + L-cysteine = (sulfur carrier)-SH + L-alanine. It functions in the pathway cofactor biosynthesis; iron-sulfur cluster biosynthesis. Its function is as follows. Master enzyme that delivers sulfur to a number of partners involved in Fe-S cluster assembly, tRNA modification or cofactor biosynthesis. Catalyzes the removal of elemental sulfur atoms from cysteine to produce alanine. Functions as a sulfur delivery protein for Fe-S cluster synthesis onto IscU, an Fe-S scaffold assembly protein, as well as other S acceptor proteins. This is Cysteine desulfurase IscS from Rickettsia felis (strain ATCC VR-1525 / URRWXCal2) (Rickettsia azadi).